Consider the following 58-residue polypeptide: Potassium channel toxin alpha-KTx 9.9 (58 aa).

Positions 1-21 (KKTSRLFTLVLIVLAMNVMMA) are cleaved as a signal peptide. The propeptide occupies 22-30 (IISDPVVEA). 3 disulfide bridges follow: cysteine 33-cysteine 49, cysteine 36-cysteine 54, and cysteine 40-cysteine 56.

This sequence belongs to the short scorpion toxin superfamily. Potassium channel inhibitor family. Alpha-KTx 09 subfamily. As to expression, expressed by the venom gland.

Its subcellular location is the secreted. Potassium channel inhibitor. The polypeptide is Potassium channel toxin alpha-KTx 9.9 (Buthus israelis (Israeli scorpion)).